Here is a 1466-residue protein sequence, read N- to C-terminus: DNA-directed RNA polymerase subunit beta'' (1466 aa).

Zn(2+)-binding residues include cysteine 220, cysteine 296, cysteine 303, and cysteine 306. Positions 618-725 (TREEDLEDEY…EDEYDSSEED (108 aa)) are disordered. 3 stretches are compositionally biased toward acidic residues: residues 621–631 (EDLEDEYETLE), 639–651 (DEYE…DEYG), and 707–725 (LEED…SEED).

The protein belongs to the RNA polymerase beta' chain family. RpoC2 subfamily. As to quaternary structure, in plastids the minimal PEP RNA polymerase catalytic core is composed of four subunits: alpha, beta, beta', and beta''. When a (nuclear-encoded) sigma factor is associated with the core the holoenzyme is formed, which can initiate transcription. Requires Zn(2+) as cofactor.

Its subcellular location is the plastid. The protein localises to the chloroplast. The enzyme catalyses RNA(n) + a ribonucleoside 5'-triphosphate = RNA(n+1) + diphosphate. In terms of biological role, DNA-dependent RNA polymerase catalyzes the transcription of DNA into RNA using the four ribonucleoside triphosphates as substrates. This chain is DNA-directed RNA polymerase subunit beta'', found in Agrostis stolonifera (Creeping bentgrass).